A 92-amino-acid polypeptide reads, in one-letter code: Small ribosomal subunit protein uS19c (92 aa).

Belongs to the universal ribosomal protein uS19 family.

It is found in the plastid. It localises to the chloroplast. Functionally, protein S19 forms a complex with S13 that binds strongly to the 16S ribosomal RNA. This chain is Small ribosomal subunit protein uS19c, found in Gracilaria tenuistipitata var. liui (Red alga).